The following is a 500-amino-acid chain: NAD(P)H-quinone oxidoreductase chain 4, chloroplastic (500 aa).

The next 14 helical transmembrane spans lie at Phe-4 to Leu-24, Tyr-35 to Phe-55, Ile-87 to Val-107, Leu-113 to Ser-130, Leu-134 to Met-154, Phe-167 to Leu-187, Ile-211 to His-231, His-242 to Val-262, Ala-272 to Ala-292, Ile-305 to Asp-325, Gly-330 to Gly-350, Leu-386 to Thr-406, Ile-416 to Met-436, and Ile-466 to Ala-486.

Belongs to the complex I subunit 4 family.

It is found in the plastid. Its subcellular location is the chloroplast thylakoid membrane. It carries out the reaction a plastoquinone + NADH + (n+1) H(+)(in) = a plastoquinol + NAD(+) + n H(+)(out). The catalysed reaction is a plastoquinone + NADPH + (n+1) H(+)(in) = a plastoquinol + NADP(+) + n H(+)(out). The polypeptide is NAD(P)H-quinone oxidoreductase chain 4, chloroplastic (Aethionema grandiflorum (Persian stone-cress)).